The following is a 129-amino-acid chain: Flagellar assembly factor FliW (129 aa).

This sequence belongs to the FliW family. In terms of assembly, interacts with flagellins FlaA and FlaB but not with FlaC; recognizes glycosylated and non-glycosylated FlaA equally. Interacts with CsrA. May form a 3-way complex of flagellin, FliS and FliW simultaneously in which FliS and FliW do not directly interact.

The protein localises to the cytoplasm. Its function is as follows. Acts as an anti-CsrA protein, binds CsrA and prevents it from repressing translation of its target genes, one of which is flagellin. Binds to flagellin and participates in the assembly of the flagellum. Functionally, overexpression leads to increased levels of FlaA and FlaB, but levels of FlaC remain stable. Involved in post-transcriptional regulation of flagellin biosynthesis. This chain is Flagellar assembly factor FliW, found in Campylobacter jejuni subsp. jejuni serotype O:6 (strain 81116 / NCTC 11828).